A 348-amino-acid chain; its full sequence is D-alanine--D-alanine ligase (348 aa).

Residues 132–334 form the ATP-grasp domain; the sequence is KRVLESIGIP…YPDLIEELVT (203 aa). 162-217 provides a ligand contact to ATP; it reads LARLTFPIFVKPANMGSSVGISKAQTKVELRKAIQLALTYDSRVLIEQGVVAREIE. Residues Asp-288, Glu-301, and Asn-303 each coordinate Mg(2+).

The protein belongs to the D-alanine--D-alanine ligase family. It depends on Mg(2+) as a cofactor. Requires Mn(2+) as cofactor.

The protein localises to the cytoplasm. It carries out the reaction 2 D-alanine + ATP = D-alanyl-D-alanine + ADP + phosphate + H(+). It participates in cell wall biogenesis; peptidoglycan biosynthesis. Its function is as follows. Cell wall formation. This chain is D-alanine--D-alanine ligase, found in Streptococcus pyogenes serotype M12 (strain MGAS2096).